Here is an 805-residue protein sequence, read N- to C-terminus: Zinc finger CCCH domain-containing protein 11B (805 aa).

C3H1-type zinc fingers lie at residues 2–29 (PNQGEDCYFFFYSTCTKGDSCPFRHCEA) and 31–57 (LGNETVCTLWQEGRCFRRVCRFRHMEI). 6 disordered regions span residues 140-194 (KVES…GLRV), 223-351 (KKMK…DKVN), 364-433 (MLLE…TCIK), 449-468 (IVASKGQSEEPAGKTKSMQE), 481-506 (KALRVQQSSESSTSSPSQHEATPGAR), and 715-805 (VTVP…PLEL). Acidic residues predominate over residues 160–175 (ADDDEDDDDQFSEEGD). Residues 364 to 390 (MLLERASQKHGESQTKLKTEGPSKTDD) show a composition bias toward basic and acidic residues. Residues 391–402 (STSGARSSSTIR) are compositionally biased toward polar residues. Residues 403-423 (IKTFSEVLAEEEHRQQEAERQ) are a coiled coil. Basic and acidic residues-rich tracts occupy residues 412–433 (EEEHRQQEAERQKSKKDTTCIK) and 455–468 (QSEEPAGKTKSMQE). 2 stretches are compositionally biased toward low complexity: residues 486–498 (QQSSESSTSSPSQ) and 730–749 (PPTQSSSDSSPPEVSGPSSS). Residues 750–763 (QMSMKTRRLSSAST) are compositionally biased toward polar residues. Residues 789–805 (EIDLDPGKDEDDLPLEL) show a composition bias toward acidic residues.

Functionally, may play a role in mRNA transport. This chain is Zinc finger CCCH domain-containing protein 11B, found in Homo sapiens (Human).